Reading from the N-terminus, the 300-residue chain is Cation-efflux pump FieF (300 aa).

6 consecutive transmembrane segments (helical) span residues 12–32 (AAIA…FAWW), 39–59 (ILAA…NLLV), 82–102 (AALA…LTGI), 114–134 (PGVG…LVSF), 151–171 (MLHY…LALS), and 172–192 (WYGW…YILY). Residues D45 and D49 each coordinate Zn(2+). 2 residues coordinate Zn(2+): H153 and D157.

The protein belongs to the cation diffusion facilitator (CDF) transporter (TC 2.A.4) family. FieF subfamily. In terms of assembly, homodimer.

It is found in the cell inner membrane. The enzyme catalyses Zn(2+)(in) + H(+)(out) = Zn(2+)(out) + H(+)(in). The catalysed reaction is Cd(2+)(in) + H(+)(out) = Cd(2+)(out) + H(+)(in). It catalyses the reaction Fe(2+)(in) + H(+)(out) = Fe(2+)(out) + H(+)(in). Divalent metal cation transporter which exports Zn(2+), Cd(2+) and possibly Fe(2+). May be involved in zinc and iron detoxification by efflux. This is Cation-efflux pump FieF from Escherichia fergusonii (strain ATCC 35469 / DSM 13698 / CCUG 18766 / IAM 14443 / JCM 21226 / LMG 7866 / NBRC 102419 / NCTC 12128 / CDC 0568-73).